Here is a 773-residue protein sequence, read N- to C-terminus: Subtilisin-like protease SBT3.4 (773 aa).

A signal peptide spans M1–A23. Residues S24–A108 constitute a propeptide, activation peptide. Residues V29–A108 enclose the Inhibitor I9 domain. In terms of domain architecture, Peptidase S8 spans I112 to A620. D142 functions as the Charge relay system in the catalytic mechanism. N200 carries an N-linked (GlcNAc...) asparagine glycan. H216 serves as the catalytic Charge relay system. N231, N408, and N536 each carry an N-linked (GlcNAc...) asparagine glycan. Positions S382–L474 constitute a PA domain. S551 functions as the Charge relay system in the catalytic mechanism. The N-linked (GlcNAc...) asparagine glycan is linked to N643.

The protein belongs to the peptidase S8 family.

It is found in the secreted. This chain is Subtilisin-like protease SBT3.4, found in Arabidopsis thaliana (Mouse-ear cress).